Reading from the N-terminus, the 225-residue chain is Cardiotrophin-like cytokine factor 1 (225 aa).

Residues 1–27 (MDLRAGDSWGMLACLCTVLWHLPAVPA) form the signal peptide. Asparagine 29 carries an N-linked (GlcNAc...) asparagine glycan.

It belongs to the IL-6 superfamily. As to quaternary structure, forms a heteromeric complex with cardiotrophin-like cytokine CRLF1/CLF-1; the CRLF1-CLCF1 complex is a ligand for the ciliary neurotrophic factor receptor/CNTFR. The CRLF1-CLCF1 heterodimer binds SORL1 (via N-terminal ectodomain); within this complex, the interaction is mediated predominantly by the CRLF1 moiety. The tripartite signaling complex formed by CRLF1, CLCF1 and CNTFR also binds SORL1. In terms of tissue distribution, expressed predominantly in lymph nodes, spleen, peripheral blood lymphocytes, bone marrow, and fetal liver.

The protein localises to the secreted. In terms of biological role, in complex with CRLF1, forms a heterodimeric neurotropic cytokine that plays a crucial role during neuronal development. Also stimulates B-cells. Binds to and activates the ILST/gp130 receptor. This is Cardiotrophin-like cytokine factor 1 (CLCF1) from Homo sapiens (Human).